Reading from the N-terminus, the 773-residue chain is DNA gyrase subunit B (773 aa).

Residues 416-530 enclose the Toprim domain; the sequence is SEIFLVEGDS…QGHVYIAQAP (115 aa). Residues Glu422, Asp495, and Asp497 each coordinate Mg(2+).

Belongs to the type II topoisomerase GyrB family. Heterotetramer, composed of two GyrA and two GyrB chains. In the heterotetramer, GyrA contains the active site tyrosine that forms a transient covalent intermediate with DNA, while GyrB binds cofactors and catalyzes ATP hydrolysis. It depends on Mg(2+) as a cofactor. The cofactor is Mn(2+). Ca(2+) is required as a cofactor.

The protein localises to the cytoplasm. It carries out the reaction ATP-dependent breakage, passage and rejoining of double-stranded DNA.. Its function is as follows. A type II topoisomerase that negatively supercoils closed circular double-stranded (ds) DNA in an ATP-dependent manner to modulate DNA topology and maintain chromosomes in an underwound state. Negative supercoiling favors strand separation, and DNA replication, transcription, recombination and repair, all of which involve strand separation. Also able to catalyze the interconversion of other topological isomers of dsDNA rings, including catenanes and knotted rings. Type II topoisomerases break and join 2 DNA strands simultaneously in an ATP-dependent manner. The chain is DNA gyrase subunit B from Helicobacter pylori (strain ATCC 700392 / 26695) (Campylobacter pylori).